The sequence spans 225 residues: MKQIQIAIDGPASSGKSTVAKIIAKDLGYTYLDTGAMYRAATYLALQHQLTAADTEDIIRLLDDYSVSFGRSESGQQLVFVGDVDVTNPIRENDVTNNVSWVSAIPEVREKLVSLQQQIASQGGIVMDGRDIGTVVLPDAELKIFLVASVDERAERRYKENLERGISADLEVLKKEIADRDYKDSHRSVSPLRPADDSITFDTTGVSISDVVAFIEEKAKKILDK.

ATP is bound at residue 10–18 (GPASSGKST).

This sequence belongs to the cytidylate kinase family. Type 1 subfamily.

Its subcellular location is the cytoplasm. The enzyme catalyses CMP + ATP = CDP + ADP. It catalyses the reaction dCMP + ATP = dCDP + ADP. The polypeptide is Cytidylate kinase (Streptococcus gordonii (strain Challis / ATCC 35105 / BCRC 15272 / CH1 / DL1 / V288)).